The following is a 382-amino-acid chain: Anhydro-N-acetylmuramic acid kinase (382 aa).

22-29 serves as a coordination point for ATP; it reads GTSMDGVD.

Belongs to the anhydro-N-acetylmuramic acid kinase family.

It catalyses the reaction 1,6-anhydro-N-acetyl-beta-muramate + ATP + H2O = N-acetyl-D-muramate 6-phosphate + ADP + H(+). It functions in the pathway amino-sugar metabolism; 1,6-anhydro-N-acetylmuramate degradation. Its pathway is cell wall biogenesis; peptidoglycan recycling. Its function is as follows. Catalyzes the specific phosphorylation of 1,6-anhydro-N-acetylmuramic acid (anhMurNAc) with the simultaneous cleavage of the 1,6-anhydro ring, generating MurNAc-6-P. Is required for the utilization of anhMurNAc either imported from the medium or derived from its own cell wall murein, and thus plays a role in cell wall recycling. This is Anhydro-N-acetylmuramic acid kinase from Burkholderia ambifaria (strain ATCC BAA-244 / DSM 16087 / CCUG 44356 / LMG 19182 / AMMD) (Burkholderia cepacia (strain AMMD)).